Here is a 334-residue protein sequence, read N- to C-terminus: Biotin synthase (334 aa).

The Radical SAM core domain maps to 55–280; sequence EEIEVEGIIS…HTMLRFAGGR (226 aa). [4Fe-4S] cluster contacts are provided by C70, C74, and C77. C113, C205, and R275 together coordinate [2Fe-2S] cluster.

This sequence belongs to the radical SAM superfamily. Biotin synthase family. Homodimer. Requires [4Fe-4S] cluster as cofactor. The cofactor is [2Fe-2S] cluster.

The enzyme catalyses (4R,5S)-dethiobiotin + (sulfur carrier)-SH + 2 reduced [2Fe-2S]-[ferredoxin] + 2 S-adenosyl-L-methionine = (sulfur carrier)-H + biotin + 2 5'-deoxyadenosine + 2 L-methionine + 2 oxidized [2Fe-2S]-[ferredoxin]. It functions in the pathway cofactor biosynthesis; biotin biosynthesis; biotin from 7,8-diaminononanoate: step 2/2. In terms of biological role, catalyzes the conversion of dethiobiotin (DTB) to biotin by the insertion of a sulfur atom into dethiobiotin via a radical-based mechanism. This is Biotin synthase from Corynebacterium glutamicum (strain ATCC 13032 / DSM 20300 / JCM 1318 / BCRC 11384 / CCUG 27702 / LMG 3730 / NBRC 12168 / NCIMB 10025 / NRRL B-2784 / 534).